The chain runs to 597 residues: UvrABC system protein C (597 aa).

A GIY-YIG domain is found at 14-91 (KKPGCYLWKD…INQYQPRFNL (78 aa)).

Belongs to the UvrC family. Interacts with UvrB in an incision complex.

The protein resides in the cytoplasm. Functionally, the UvrABC repair system catalyzes the recognition and processing of DNA lesions. UvrC both incises the 5' and 3' sides of the lesion. The N-terminal half is responsible for the 3' incision and the C-terminal half is responsible for the 5' incision. The polypeptide is UvrABC system protein C (Mycoplasma genitalium (strain ATCC 33530 / DSM 19775 / NCTC 10195 / G37) (Mycoplasmoides genitalium)).